A 96-amino-acid polypeptide reads, in one-letter code: Co-chaperonin GroES (96 aa).

This sequence belongs to the GroES chaperonin family. As to quaternary structure, heptamer of 7 subunits arranged in a ring. Interacts with the chaperonin GroEL.

The protein localises to the cytoplasm. Functionally, together with the chaperonin GroEL, plays an essential role in assisting protein folding. The GroEL-GroES system forms a nano-cage that allows encapsulation of the non-native substrate proteins and provides a physical environment optimized to promote and accelerate protein folding. GroES binds to the apical surface of the GroEL ring, thereby capping the opening of the GroEL channel. The chain is Co-chaperonin GroES from Tremblaya princeps.